The sequence spans 160 residues: Ribosomal RNA large subunit methyltransferase H (160 aa).

The disordered stretch occupies residues 44–63; the sequence is LPESRASNSATRKREEAVQI. Residues Leu-76, Gly-108, and 127–132 each bind S-adenosyl-L-methionine; that span reads LGKMTW.

Belongs to the RNA methyltransferase RlmH family. In terms of assembly, homodimer.

It localises to the cytoplasm. The enzyme catalyses pseudouridine(1915) in 23S rRNA + S-adenosyl-L-methionine = N(3)-methylpseudouridine(1915) in 23S rRNA + S-adenosyl-L-homocysteine + H(+). Specifically methylates the pseudouridine at position 1915 (m3Psi1915) in 23S rRNA. This is Ribosomal RNA large subunit methyltransferase H from Allorhizobium ampelinum (strain ATCC BAA-846 / DSM 112012 / S4) (Agrobacterium vitis (strain S4)).